A 370-amino-acid chain; its full sequence is Queuine tRNA-ribosyltransferase (370 aa).

The active-site Proton acceptor is the D93. Substrate-binding positions include 93–97 (DSGGF), D147, Q189, and G216. An RNA binding region spans residues 247 to 253 (GVGSPDC). D266 functions as the Nucleophile in the catalytic mechanism. The segment at 271–275 (TRIAR) is RNA binding; important for wobble base 34 recognition. Zn(2+) contacts are provided by C304, C306, C309, and H335.

Belongs to the queuine tRNA-ribosyltransferase family. Homodimer. Within each dimer, one monomer is responsible for RNA recognition and catalysis, while the other monomer binds to the replacement base PreQ1. The cofactor is Zn(2+).

It catalyses the reaction 7-aminomethyl-7-carbaguanine + guanosine(34) in tRNA = 7-aminomethyl-7-carbaguanosine(34) in tRNA + guanine. Its pathway is tRNA modification; tRNA-queuosine biosynthesis. In terms of biological role, catalyzes the base-exchange of a guanine (G) residue with the queuine precursor 7-aminomethyl-7-deazaguanine (PreQ1) at position 34 (anticodon wobble position) in tRNAs with GU(N) anticodons (tRNA-Asp, -Asn, -His and -Tyr). Catalysis occurs through a double-displacement mechanism. The nucleophile active site attacks the C1' of nucleotide 34 to detach the guanine base from the RNA, forming a covalent enzyme-RNA intermediate. The proton acceptor active site deprotonates the incoming PreQ1, allowing a nucleophilic attack on the C1' of the ribose to form the product. After dissociation, two additional enzymatic reactions on the tRNA convert PreQ1 to queuine (Q), resulting in the hypermodified nucleoside queuosine (7-(((4,5-cis-dihydroxy-2-cyclopenten-1-yl)amino)methyl)-7-deazaguanosine). The protein is Queuine tRNA-ribosyltransferase of Desulforamulus reducens (strain ATCC BAA-1160 / DSM 100696 / MI-1) (Desulfotomaculum reducens).